A 192-amino-acid polypeptide reads, in one-letter code: MIKAKIEDSGMPPTRAEIARELGFRSANAAEEHLKALARKEVIEIVPGASRGIRVLRHDEVEAKGLPLIGRVAAGEPILAQEHVETHYEVDPALFKPRADFLLRVNGMSMKDIGIMDGDLLAVHKTQDVHNGQVVVARVDDDVTVKRLDKQGSQVLLHAENEDFAPIVVDLTHQQLTIEGIAVGVIRTADWM.

The H-T-H motif DNA-binding region spans 15-35 (RAEIARELGFRSANAAEEHLK). Active-site for autocatalytic cleavage activity residues include Ser109 and Lys146.

Belongs to the peptidase S24 family. Homodimer.

The enzyme catalyses Hydrolysis of Ala-|-Gly bond in repressor LexA.. Represses a number of genes involved in the response to DNA damage (SOS response), including recA and lexA. In the presence of single-stranded DNA, RecA interacts with LexA causing an autocatalytic cleavage which disrupts the DNA-binding part of LexA, leading to derepression of the SOS regulon and eventually DNA repair. The sequence is that of LexA repressor from Photobacterium profundum (strain SS9).